Reading from the N-terminus, the 132-residue chain is MPNPAETTTQVRLDKWLWAARFYKTRSLARDQIEGGKVHYNGQRSKPGKAVEAGALIRVWQGQDEREVRVLQVSEQRKSAPLAQLLYEETEASLKKRAENSEARRFNSQFAPSPERRPDKQERRQLIKVKQY.

The S4 RNA-binding domain maps to 11-73 (VRLDKWLWAA…DEREVRVLQV (63 aa)). 2 stretches are compositionally biased toward basic and acidic residues: residues 94 to 105 (LKKRAENSEARR) and 114 to 125 (PERRPDKQERRQ). Residues 94–132 (LKKRAENSEARRFNSQFAPSPERRPDKQERRQLIKVKQY) form a disordered region.

Belongs to the HSP15 family.

In terms of biological role, may play an important role in binding of nucleic acid. More specific for RNA. In Aeromonas salmonicida, this protein is Heat shock protein 15 homolog (hslR).